The sequence spans 476 residues: Aspartyl/glutamyl-tRNA(Asn/Gln) amidotransferase subunit B (476 aa).

It belongs to the GatB/GatE family. GatB subfamily. Heterotrimer of A, B and C subunits.

The enzyme catalyses L-glutamyl-tRNA(Gln) + L-glutamine + ATP + H2O = L-glutaminyl-tRNA(Gln) + L-glutamate + ADP + phosphate + H(+). The catalysed reaction is L-aspartyl-tRNA(Asn) + L-glutamine + ATP + H2O = L-asparaginyl-tRNA(Asn) + L-glutamate + ADP + phosphate + 2 H(+). In terms of biological role, allows the formation of correctly charged Asn-tRNA(Asn) or Gln-tRNA(Gln) through the transamidation of misacylated Asp-tRNA(Asn) or Glu-tRNA(Gln) in organisms which lack either or both of asparaginyl-tRNA or glutaminyl-tRNA synthetases. The reaction takes place in the presence of glutamine and ATP through an activated phospho-Asp-tRNA(Asn) or phospho-Glu-tRNA(Gln). The protein is Aspartyl/glutamyl-tRNA(Asn/Gln) amidotransferase subunit B of Neisseria meningitidis serogroup A / serotype 4A (strain DSM 15465 / Z2491).